Reading from the N-terminus, the 1377-residue chain is MAQTHSFNGRKRVRKFFGKIPEVAEMPNLIEVQKASYDQFLMVEEPSGGRPDEGLQAVFKSVFPIQDFSGASMLEFVRYEFDPPKFDVDECRQRDLTYSAPLKVTLRLIVFDIDEDTGAKSIKDIKEQDVYMGDMPLMTDNGTFIVNGTERVIVSQMHRSPGVFFDHDKGKTHSSGKLLFAARVIPYRGSWLDIEFDSKDIVYARIDRRRKLPATTLLMALGMDGEEILSTFYKTVTYTRDGDNWRIPYSAERFKGMKIISDLVDADTGEVVLEAGKKLTARAAKQLAEKGLKAIKATEDDLFGSYLAEDVVNYATGEIYLEAGDEIDEKVLKTLIDTGETEINVLDIDHVNIGAYIRNTLAVDKNESRQEALFDIYRVMRPGEPPTMDSAEAMFHSLFFDSERYDLSAVGRVKMNMRLDLDAEDTVRVLRKEDILAVVKMLVELRDGRGEIDDIDNLGNRRVRSVGELMENQYRVGLLRMERAIKERMSSIEIDTVMPQDLINAKPAAAAVREFFGSSQLSQFMDQTNPLSEITHKRRLSALGPGGLTRERAGFEVRDVHPTHYGRICPIETPEGPNIGLINSLATFARVNKYGFIESPYRKVVDGKVTNDVVYLSAMEEAKHSVAQANVELDEQGGFVDEFVICRHAGEVMMAPRENVDLMDVSPKQLVSVAAALIPFLENDDANRALMGSNMQRQAVPLVRAEAPFVGTGMEPIVARDSGAAIAARRGGIVDQVDATRIVIRATEELDPSKSGVDIYRLQKFQRSNQSTCINQRPLVRVGDRIHKGDIIADGPSTDLGDLALGRNVLVAFMPWNGYNYEDSILLSEKIVSDDVFTSIHIEEFEVAARDTKLGPEEITRDIPNVSEEALKNLDEAGIVYIGAEVHPGDILVGKITPKGESPMTPEEKLLRAIFGEKASDVRDTSMRMPPGTYGTVVEVRVFNRHGVEKDERAMAIEREEIERLAKDRDDEQAILDRNVYGRLADMIDGKVAAAGPKGFKKGTTITRELMTEYPRSQWWQFAVEDEKLQGELEALRSQYDDSKKLLEARFMDKVEKVQRGDEMPPGVMKMVKVFVAVKRKIQPGDKMAGRHGNKGVVSRILPVEDMPFLEDGTHADIVLNPLGVPSRMNVGQILETHLGWACAGMGKKIGELLDVYRKTANIEPLRQTLEHIYPDNDRNEPVRSYDDDAILMLANQVKRGVSIATPVFDGAVEADINAMLTDAGLATSGQSTLYDGRTGEPFDRQVTMGYIYMLKLHHLVDDKIHARSIGPYSLVTQQPLGGKAQFGGQRFGEMEVWALEAYGAAYTLQEMLTVKSDDVAGRTKVYEAIVRGDDTFEAGIPESFNVLVKEMRSLGLNVELDDTREAEQPALPDAAE.

Belongs to the RNA polymerase beta chain family. The RNAP catalytic core consists of 2 alpha, 1 beta, 1 beta' and 1 omega subunit. When a sigma factor is associated with the core the holoenzyme is formed, which can initiate transcription.

The catalysed reaction is RNA(n) + a ribonucleoside 5'-triphosphate = RNA(n+1) + diphosphate. Functionally, DNA-dependent RNA polymerase catalyzes the transcription of DNA into RNA using the four ribonucleoside triphosphates as substrates. In Brucella abortus (strain S19), this protein is DNA-directed RNA polymerase subunit beta.